The following is a 254-amino-acid chain: Thiazole synthase (254 aa).

Lys-95 serves as the catalytic Schiff-base intermediate with DXP. 1-deoxy-D-xylulose 5-phosphate-binding positions include Gly-156, 182 to 183 (AG), and 204 to 205 (NT).

Belongs to the ThiG family. As to quaternary structure, homotetramer. Forms heterodimers with either ThiH or ThiS.

It is found in the cytoplasm. The enzyme catalyses [ThiS sulfur-carrier protein]-C-terminal-Gly-aminoethanethioate + 2-iminoacetate + 1-deoxy-D-xylulose 5-phosphate = [ThiS sulfur-carrier protein]-C-terminal Gly-Gly + 2-[(2R,5Z)-2-carboxy-4-methylthiazol-5(2H)-ylidene]ethyl phosphate + 2 H2O + H(+). It participates in cofactor biosynthesis; thiamine diphosphate biosynthesis. In terms of biological role, catalyzes the rearrangement of 1-deoxy-D-xylulose 5-phosphate (DXP) to produce the thiazole phosphate moiety of thiamine. Sulfur is provided by the thiocarboxylate moiety of the carrier protein ThiS. In vitro, sulfur can be provided by H(2)S. The polypeptide is Thiazole synthase (Shewanella sp. (strain MR-7)).